A 372-amino-acid chain; its full sequence is Tribbles homolog 1 (372 aa).

Disordered regions lie at residues 1 to 23 (MRVGPVRSAMSGASQPRGPALLF) and 52 to 86 (ECSSPPDYLSPPGSPCSPQPPPAAPGAGGGSGSAP). The span at 59–75 (YLSPPGSPCSPQPPPAA) shows a compositional bias: pro residues. One can recognise a Protein kinase domain in the interval 91–338 (IADYLLLPLA…APEILLHPWF (248 aa)). The short motif at 355 to 360 (DQIVPE) is the COP1-binding element.

This sequence belongs to the protein kinase superfamily. CAMK Ser/Thr protein kinase family. Tribbles subfamily. Monomer. Interacts (via protein kinase domain) with CEBPA. Interacts with COP1. As to expression, expressed in most human tissues with the highest levels in skeletal muscle, thyroid gland, pancreas, peripheral blood leukocytes, and bone marrow.

In terms of biological role, adapter protein involved in protein degradation by interacting with COP1 ubiquitin ligase. The COP1-binding motif is masked by autoinhibitory interactions with the protein kinase domain. Serves to alter COP1 substrate specificity by directing the activity of COP1 toward CEBPA. Binds selectively the recognition sequence of CEBPA. Regulates myeloid cell differentiation by altering the expression of CEBPA in a COP1-dependent manner. Controls macrophage, eosinophil and neutrophil differentiation via the COP1-binding domain. Interacts with MAPK kinases and regulates activation of MAP kinases, but has no kinase activity. This is Tribbles homolog 1 from Homo sapiens (Human).